The chain runs to 177 residues: MSEFITVARPYAKAAFDFAVEHQSVERWQDMLTFAAEVTKNEQMAELLSGALAPETLAESFIAVCGEQLDENGQNLIRVMAENGRLNALPDVLEQFIHLRAVSEATAEVDVISAAALSEQQLAKISAAMEKRLSRKVKLNCKIDKSVMAGVIIRSGDMVIDGSVRGRLERLADVLQS.

This sequence belongs to the ATPase delta chain family. F-type ATPases have 2 components, F(1) - the catalytic core - and F(0) - the membrane proton channel. F(1) has five subunits: alpha(3), beta(3), gamma(1), delta(1), epsilon(1). F(0) has three main subunits: a(1), b(2) and c(10-14). The alpha and beta chains form an alternating ring which encloses part of the gamma chain. F(1) is attached to F(0) by a central stalk formed by the gamma and epsilon chains, while a peripheral stalk is formed by the delta and b chains.

It is found in the cell inner membrane. Functionally, f(1)F(0) ATP synthase produces ATP from ADP in the presence of a proton or sodium gradient. F-type ATPases consist of two structural domains, F(1) containing the extramembraneous catalytic core and F(0) containing the membrane proton channel, linked together by a central stalk and a peripheral stalk. During catalysis, ATP synthesis in the catalytic domain of F(1) is coupled via a rotary mechanism of the central stalk subunits to proton translocation. Its function is as follows. This protein is part of the stalk that links CF(0) to CF(1). It either transmits conformational changes from CF(0) to CF(1) or is implicated in proton conduction. This Shigella flexneri protein is ATP synthase subunit delta.